The chain runs to 321 residues: Putative membrane-bound redox modulator Alx (321 aa).

Topologically, residues 1 to 6 are periplasmic; the sequence is MNTVGT. A helical transmembrane segment spans residues 7 to 27; it reads PLLWGGFAVVVAIMLAIDLLL. The Cytoplasmic portion of the chain corresponds to 28–43; the sequence is QGRRGAHAMTMKQAAA. A helical transmembrane segment spans residues 44–64; the sequence is WSLVWVTLSLLFNAAFWWYLV. The Periplasmic portion of the chain corresponds to 65–89; the sequence is QTEGRAVADPQALAFLTGYLIEKSL. Residues 90 to 110 traverse the membrane as a helical segment; the sequence is AVDNVFVWLMLFSYFSVPAAL. Residues 111-113 are Cytoplasmic-facing; it reads QRR. Residues 114-134 form a helical membrane-spanning segment; sequence VLVYGVLGAIVLRTIMIFTGS. Position 135 (W135) is a topological domain, periplasmic. The helical transmembrane segment at 136-156 threads the bilayer; sequence LISQFDWILYIFGAFLLFTGV. The Cytoplasmic portion of the chain corresponds to 157 to 198; it reads KMALAHEDESGIGDKPLVRWLRGHLRMTDTIDNEHFFVRKNG. Residues 199 to 219 traverse the membrane as a helical segment; it reads LLYATPLMLVLILVELSDVIF. Topologically, residues 220 to 225 are periplasmic; the sequence is AVDSIP. A helical membrane pass occupies residues 226 to 246; the sequence is AIFAVTTDPFIVLTSNLFAIL. The Cytoplasmic portion of the chain corresponds to 247–261; that stretch reads GLRAMYFLLAGVAER. The helical transmembrane segment at 262–282 threads the bilayer; it reads FSMLKYGLAVILVFIGIKMLI. Residues 283-286 are Periplasmic-facing; it reads VDFY. The chain crosses the membrane as a helical span at residues 287 to 307; it reads HIPIAVSLGVVFGILVMTFII. Residues 308-321 are Cytoplasmic-facing; the sequence is NAWVNYRHDKQRVG.

Belongs to the TerC family.

It is found in the cell inner membrane. Functionally, has been proposed to be a redox modulator. This is Putative membrane-bound redox modulator Alx (alx) from Escherichia coli O157:H7.